A 95-amino-acid polypeptide reads, in one-letter code: Small ribosomal subunit protein bS20 (95 aa).

This sequence belongs to the bacterial ribosomal protein bS20 family.

In terms of biological role, binds directly to 16S ribosomal RNA. This is Small ribosomal subunit protein bS20 from Ehrlichia chaffeensis (strain ATCC CRL-10679 / Arkansas).